The sequence spans 354 residues: Methionine import ATP-binding protein MetN (354 aa).

Positions 8-250 (LDHIDITFRQ…PKEALTQEFI (243 aa)) constitute an ABC transporter domain. ATP is bound at residue 42–49 (GYSGAGKS).

This sequence belongs to the ABC transporter superfamily. Methionine importer (TC 3.A.1.24) family. The complex is composed of two ATP-binding proteins (MetN), two transmembrane proteins (MetI) and a solute-binding protein (MetQ).

The protein resides in the cell membrane. The catalysed reaction is L-methionine(out) + ATP + H2O = L-methionine(in) + ADP + phosphate + H(+). The enzyme catalyses D-methionine(out) + ATP + H2O = D-methionine(in) + ADP + phosphate + H(+). Its function is as follows. Part of the ABC transporter complex MetNIQ involved in methionine import. Responsible for energy coupling to the transport system. This is Methionine import ATP-binding protein MetN from Streptococcus pyogenes serotype M3 (strain ATCC BAA-595 / MGAS315).